The following is a 212-amino-acid chain: Glycerol-3-phosphate acyltransferase (212 aa).

5 helical membrane-spanning segments follow: residues 3–23, 51–71, 78–98, 115–135, and 139–159; these read ILLA…VIVS, KAAI…VWLA, DVAV…PVFF, AVHP…AFFF, and SLAA…LFGT.

The protein belongs to the PlsY family. Probably interacts with PlsX.

It localises to the cell inner membrane. The enzyme catalyses an acyl phosphate + sn-glycerol 3-phosphate = a 1-acyl-sn-glycero-3-phosphate + phosphate. The protein operates within lipid metabolism; phospholipid metabolism. Catalyzes the transfer of an acyl group from acyl-phosphate (acyl-PO(4)) to glycerol-3-phosphate (G3P) to form lysophosphatidic acid (LPA). This enzyme utilizes acyl-phosphate as fatty acyl donor, but not acyl-CoA or acyl-ACP. This chain is Glycerol-3-phosphate acyltransferase, found in Burkholderia vietnamiensis (strain G4 / LMG 22486) (Burkholderia cepacia (strain R1808)).